We begin with the raw amino-acid sequence, 230 residues long: GDT1-like protein 4 (230 aa).

The next 6 helical transmembrane spans lie at 12-32 (LAMT…AILA), 39-59 (LVLA…ATLG), 71-91 (THHI…WDGF), 135-155 (AFLT…NFFG), 175-195 (FGVV…AVIG), and 207-227 (IVAL…YLTS).

Belongs to the GDT1 family.

The protein localises to the membrane. The protein is GDT1-like protein 4 of Arabidopsis thaliana (Mouse-ear cress).